The sequence spans 570 residues: Sulfite reductase [NADPH] hemoprotein beta-component 1 (570 aa).

[4Fe-4S] cluster-binding residues include Cys-434, Cys-440, Cys-479, and Cys-483. Cys-483 contacts siroheme.

Belongs to the nitrite and sulfite reductase 4Fe-4S domain family. In terms of assembly, alpha(8)-beta(8). The alpha component is a flavoprotein, the beta component is a hemoprotein. Siroheme serves as cofactor. Requires [4Fe-4S] cluster as cofactor.

The catalysed reaction is hydrogen sulfide + 3 NADP(+) + 3 H2O = sulfite + 3 NADPH + 4 H(+). Its pathway is sulfur metabolism; hydrogen sulfide biosynthesis; hydrogen sulfide from sulfite (NADPH route): step 1/1. Its function is as follows. Component of the sulfite reductase complex that catalyzes the 6-electron reduction of sulfite to sulfide. This is one of several activities required for the biosynthesis of L-cysteine from sulfate. This chain is Sulfite reductase [NADPH] hemoprotein beta-component 1, found in Klebsiella pneumoniae (strain 342).